The following is a 469-amino-acid chain: MSQDTLFDKVWDLHKVANLPGGSDQILIGLHLIHEVTSPQAFGALKDKNLKVKFPQRTVATVDHIVPTDNQSRPFKDNLAEQMIDTLEKNCIEHKIKFFNIGSGNQGIVHVVAPELGLTQPGMTIACGDSHTSTHGAFGSIAFGIGTSQVRDVLASQTIAMNKLKVRQIWCENKLSNGIYAKDLVLHIINQLGVKAGVGYAYEFAGPAISELSMEERMTICNMSIEGGARCGYINPDEKTFSYMKDKLCSPQNENWEKAVKWWKSLESSDNCVYDDVFKLDASKVEPTITWGITPGQSIGVNQKIPSLNQIHPNDQFIAEEAYEYMSFKPGQSIKNTPIDVCFIGSCTNGRISDLRVAAQVLEHNKVAKNIKAFVVPGSEKVAKEAKEEGLDKIFIKAGFQWREPGCSMCLAMNSDKLIGNQVSASSSNRNFKGRQGSPNGRTLLMSPAMVAAASITGKVSDVRDFINK.

3 residues coordinate [4Fe-4S] cluster: Cys347, Cys407, and Cys410.

Belongs to the aconitase/IPM isomerase family. LeuC type 1 subfamily. Heterodimer of LeuC and LeuD. Requires [4Fe-4S] cluster as cofactor.

The catalysed reaction is (2R,3S)-3-isopropylmalate = (2S)-2-isopropylmalate. Its pathway is amino-acid biosynthesis; L-leucine biosynthesis; L-leucine from 3-methyl-2-oxobutanoate: step 2/4. In terms of biological role, catalyzes the isomerization between 2-isopropylmalate and 3-isopropylmalate, via the formation of 2-isopropylmaleate. The protein is 3-isopropylmalate dehydratase large subunit of Prochlorococcus marinus subsp. pastoris (strain CCMP1986 / NIES-2087 / MED4).